A 148-amino-acid chain; its full sequence is Snaclec B9 (148 aa).

Residues 1 to 24 (MGRFIFVSFGLLVVFLSLSGTGAA) form the signal peptide. 3 disulfides stabilise this stretch: Cys-27–Cys-38, Cys-55–Cys-144, and Cys-121–Cys-136. The 112-residue stretch at 34 to 145 (YDQHCYKVFD…CRLLGHFVCK (112 aa)) folds into the C-type lectin domain. N-linked (GlcNAc...) asparagine glycans are attached at residues Asn-57 and Asn-60.

This sequence belongs to the snaclec family. In terms of assembly, heterodimer; disulfide-linked. Expressed by the venom gland.

Its subcellular location is the secreted. Its function is as follows. Interferes with one step of hemostasis (modulation of platelet aggregation, or coagulation cascade, for example). In Macrovipera lebetinus (Levantine viper), this protein is Snaclec B9.